Reading from the N-terminus, the 387-residue chain is Carbamoyl phosphate synthase small chain (387 aa).

Residues 1–189 (MIKSAILVLE…GLPEDKQEQD (189 aa)) are CPSase. Serine 47, glycine 241, and glycine 243 together coordinate L-glutamine. In terms of domain architecture, Glutamine amidotransferase type-1 spans 193–380 (HVVAYDFGAK…IELIEQYCQK (188 aa)). The active-site Nucleophile is the cysteine 269. Residues leucine 270, glutamine 273, asparagine 311, glycine 313, and phenylalanine 314 each contribute to the L-glutamine site. Catalysis depends on residues histidine 353 and glutamate 355.

It belongs to the CarA family. In terms of assembly, composed of two chains; the small (or glutamine) chain promotes the hydrolysis of glutamine to ammonia, which is used by the large (or ammonia) chain to synthesize carbamoyl phosphate. Tetramer of heterodimers (alpha,beta)4.

It catalyses the reaction hydrogencarbonate + L-glutamine + 2 ATP + H2O = carbamoyl phosphate + L-glutamate + 2 ADP + phosphate + 2 H(+). The enzyme catalyses L-glutamine + H2O = L-glutamate + NH4(+). It functions in the pathway amino-acid biosynthesis; L-arginine biosynthesis; carbamoyl phosphate from bicarbonate: step 1/1. It participates in pyrimidine metabolism; UMP biosynthesis via de novo pathway; (S)-dihydroorotate from bicarbonate: step 1/3. In terms of biological role, small subunit of the glutamine-dependent carbamoyl phosphate synthetase (CPSase). CPSase catalyzes the formation of carbamoyl phosphate from the ammonia moiety of glutamine, carbonate, and phosphate donated by ATP, constituting the first step of 2 biosynthetic pathways, one leading to arginine and/or urea and the other to pyrimidine nucleotides. The small subunit (glutamine amidotransferase) binds and cleaves glutamine to supply the large subunit with the substrate ammonia. This Photorhabdus laumondii subsp. laumondii (strain DSM 15139 / CIP 105565 / TT01) (Photorhabdus luminescens subsp. laumondii) protein is Carbamoyl phosphate synthase small chain.